The sequence spans 100 residues: Cytochrome bo(3) ubiquinol oxidase subunit 4 (100 aa).

Topologically, residues 1–9 (MLKNRYLKY) are cytoplasmic. A helical transmembrane segment spans residues 10-32 (LFILILLSILSIMPIFAIIYRIF). At 33–36 (SRNY) the chain is on the extracellular side. Residues 37-59 (LYAFIIVCLFFQILAHIKFFLNL) traverse the membrane as a helical segment. The Cytoplasmic portion of the chain corresponds to 60–68 (DFSLEQRWK). A helical membrane pass occupies residues 69-90 (LISVIFSLVVGLIILLGSIWVI). At 91-100 (KNLNNNLCIM) the chain is on the extracellular side.

This sequence belongs to the cytochrome c oxidase bacterial subunit 4 family. As to quaternary structure, heterooctamer of two A chains, two B chains, two C chains and two D chains.

The protein localises to the cell membrane. In terms of biological role, cytochrome bo(3) ubiquinol terminal oxidase is the component of the aerobic respiratory chain of E.coli that predominates when cells are grown at high aeration. Has proton pump activity across the membrane in addition to electron transfer, pumping 2 protons/electron. This is Cytochrome bo(3) ubiquinol oxidase subunit 4 (cyoD) from Buchnera aphidicola subsp. Baizongia pistaciae (strain Bp).